The primary structure comprises 98 residues: Phosphoribosyl-ATP pyrophosphatase (98 aa).

It belongs to the PRA-PH family.

The protein resides in the cytoplasm. It catalyses the reaction 1-(5-phospho-beta-D-ribosyl)-ATP + H2O = 1-(5-phospho-beta-D-ribosyl)-5'-AMP + diphosphate + H(+). It functions in the pathway amino-acid biosynthesis; L-histidine biosynthesis; L-histidine from 5-phospho-alpha-D-ribose 1-diphosphate: step 2/9. The sequence is that of Phosphoribosyl-ATP pyrophosphatase from Haloarcula marismortui (strain ATCC 43049 / DSM 3752 / JCM 8966 / VKM B-1809) (Halobacterium marismortui).